Reading from the N-terminus, the 1631-residue chain is ABC transporter A family member 6 (1631 aa).

A run of 7 helical transmembrane segments spans residues 25-45 (ICCEIVFPIVIIGVLFAILAL), 242-262 (SVFITAALMMFSFRLVTDVVI), 285-305 (SWIITSLITSLPVTLLIVVIF), 317-337 (GIVIITFVLYLITLLLLSFIF), 346-366 (FCGLLSFVIVIAINICGIFVS), 372-392 (VSVKLLLSIFSPIAFSNSIYI), and 416-436 (ILMLGIDIIIYIILIWYFEKV). The 234-residue stretch at 491 to 724 (ISIRNLRKEF…FGQGYLLTCN (234 aa)) folds into the ABC transporter 1 domain. Residue 527 to 534 (GPNGCGKS) participates in ATP binding. A run of 7 helical transmembrane segments spans residues 866–886 (SFFLSIILPMALIIGSIILYK), 1047–1067 (AIIYFVFILMAGFSLMAGSFA), 1099–1119 (WDFFFAFIISILSCSILAGVI), 1127–1147 (FGSFLLCLILLSCAIIPLGYL), 1158–1178 (AVGAITAILFVFGLVFTIASL), 1198–1218 (IIDLIFSIISPIFALNRIVFI), and 1242–1262 (LGTPLIVLAGHAVLWNVWILL). The ABC transporter 2 domain occupies 1309–1544 (IQFKNLHKLF…FGAGYSIDVK (236 aa)). 1347-1354 (GLNGGGKS) lines the ATP pocket.

This sequence belongs to the ABC transporter superfamily. ABCA family.

The protein resides in the membrane. The protein is ABC transporter A family member 6 (abcA6) of Dictyostelium discoideum (Social amoeba).